The sequence spans 157 residues: Transcription elongation factor GreB (157 aa).

Residues 52–73 (KKLLREIDRRVRYLRKRLEDMR) are a coiled coil.

Belongs to the GreA/GreB family. GreB subfamily.

In terms of biological role, necessary for efficient RNA polymerase transcription elongation past template-encoded arresting sites. The arresting sites in DNA have the property of trapping a certain fraction of elongating RNA polymerases that pass through, resulting in locked ternary complexes. Cleavage of the nascent transcript by cleavage factors such as GreA or GreB allows the resumption of elongation from the new 3'terminus. GreB releases sequences of up to 9 nucleotides in length. The chain is Transcription elongation factor GreB from Pseudomonas syringae pv. tomato (strain ATCC BAA-871 / DC3000).